The primary structure comprises 498 residues: ATP synthase subunit beta, chloroplastic (498 aa).

Position 172–179 (172–179 (GGAGVGKT)) interacts with ATP.

The protein belongs to the ATPase alpha/beta chains family. F-type ATPases have 2 components, CF(1) - the catalytic core - and CF(0) - the membrane proton channel. CF(1) has five subunits: alpha(3), beta(3), gamma(1), delta(1), epsilon(1). CF(0) has four main subunits: a(1), b(1), b'(1) and c(9-12).

Its subcellular location is the plastid. It is found in the chloroplast thylakoid membrane. It catalyses the reaction ATP + H2O + 4 H(+)(in) = ADP + phosphate + 5 H(+)(out). Its function is as follows. Produces ATP from ADP in the presence of a proton gradient across the membrane. The catalytic sites are hosted primarily by the beta subunits. The protein is ATP synthase subunit beta, chloroplastic of Spinacia oleracea (Spinach).